Here is a 135-residue protein sequence, read N- to C-terminus: Protein NrdI (135 aa).

It belongs to the NrdI family.

In terms of biological role, probably involved in ribonucleotide reductase function. The sequence is that of Protein NrdI from Pectobacterium carotovorum subsp. carotovorum (strain PC1).